A 319-amino-acid polypeptide reads, in one-letter code: Acetyl-coenzyme A carboxylase carboxyl transferase subunit alpha (319 aa).

Residues 35–296 (NLDEEVQRLR…KAQLLADLSD (262 aa)) form the CoA carboxyltransferase C-terminal domain.

The protein belongs to the AccA family. As to quaternary structure, acetyl-CoA carboxylase is a heterohexamer composed of biotin carboxyl carrier protein (AccB), biotin carboxylase (AccC) and two subunits each of ACCase subunit alpha (AccA) and ACCase subunit beta (AccD).

The protein resides in the cytoplasm. The enzyme catalyses N(6)-carboxybiotinyl-L-lysyl-[protein] + acetyl-CoA = N(6)-biotinyl-L-lysyl-[protein] + malonyl-CoA. The protein operates within lipid metabolism; malonyl-CoA biosynthesis; malonyl-CoA from acetyl-CoA: step 1/1. Functionally, component of the acetyl coenzyme A carboxylase (ACC) complex. First, biotin carboxylase catalyzes the carboxylation of biotin on its carrier protein (BCCP) and then the CO(2) group is transferred by the carboxyltransferase to acetyl-CoA to form malonyl-CoA. In Yersinia enterocolitica serotype O:8 / biotype 1B (strain NCTC 13174 / 8081), this protein is Acetyl-coenzyme A carboxylase carboxyl transferase subunit alpha.